The sequence spans 931 residues: Dipeptidyl aminopeptidase A (931 aa).

Residues 1-13 (MSASTHSHKRKNS) show a composition bias toward basic residues. Residues 1-58 (MSASTHSHKRKNSHLFPQRKSSNSSMDKPFFPNNDSVANTDPQSNENGHTINEIRPTE) form a disordered region. Residues 1–119 (MSASTHSHKR…GEWSLPEKRS (119 aa)) lie on the Cytoplasmic side of the membrane. The span at 33 to 50 (NNDSVANTDPQSNENGHT) shows a compositional bias: polar residues. The chain crosses the membrane as a helical; Signal-anchor for type II membrane protein span at residues 120-140 (YVLVFTLIALSVLVLLVILIP). Residues 141 to 931 (SKLLPTKITR…RFDNTEVLHL (791 aa)) lie on the Lumenal side of the membrane. A glycan (N-linked (GlcNAc...) asparagine) is linked at Asn-377. Residue Ser-785 is the Charge relay system of the active site. The N-linked (GlcNAc...) asparagine glycan is linked to Asn-814. Active-site charge relay system residues include Asp-863 and His-896.

This sequence belongs to the peptidase S9B family.

It is found in the vacuole membrane. Responsible for the proteolytic maturation of the alpha-factor precursor. The sequence is that of Dipeptidyl aminopeptidase A (STE13) from Saccharomyces cerevisiae (strain ATCC 204508 / S288c) (Baker's yeast).